Consider the following 279-residue polypeptide: Nitrate import permease protein NrtB (279 aa).

Residues 86 to 270 (IAASLQRVAV…LLNALVGFIA (185 aa)) enclose the ABC transmembrane type-1 domain. Helical transmembrane passes span 98–118 (LMAA…VLMF), 124–144 (IFQV…LAAF), 151–171 (AIFV…AVGV), 196–216 (VLLP…IGLS), 217–237 (WLAI…FFIW), and 249–269 (ILAI…VGFI).

This sequence belongs to the binding-protein-dependent transport system permease family. CysTW subfamily. As to quaternary structure, the complex is composed of two ATP-binding proteins (NrtC and NrtD), two transmembrane proteins (NrtB) and a solute-binding protein (NrtA).

It localises to the cell inner membrane. In terms of biological role, part of the ABC transporter complex NrtABCD involved in nitrate uptake. The complex is probably also involved in nitrite transport. Probably responsible for the translocation of the substrate across the membrane. The polypeptide is Nitrate import permease protein NrtB (Leptolyngbya laminosa (Phormidium laminosum)).